We begin with the raw amino-acid sequence, 192 residues long: UPF0149 protein YE3397 (192 aa).

The protein belongs to the UPF0149 family.

This chain is UPF0149 protein YE3397, found in Yersinia enterocolitica serotype O:8 / biotype 1B (strain NCTC 13174 / 8081).